A 228-amino-acid polypeptide reads, in one-letter code: Urease accessory protein UreF (228 aa).

This sequence belongs to the UreF family. As to quaternary structure, ureD, UreF and UreG form a complex that acts as a GTP-hydrolysis-dependent molecular chaperone, activating the urease apoprotein by helping to assemble the nickel containing metallocenter of UreC. The UreE protein probably delivers the nickel.

Its subcellular location is the cytoplasm. Required for maturation of urease via the functional incorporation of the urease nickel metallocenter. The chain is Urease accessory protein UreF from Brucella ovis (strain ATCC 25840 / 63/290 / NCTC 10512).